We begin with the raw amino-acid sequence, 346 residues long: [LysW]-lysine/[LysW]-ornithine hydrolase (346 aa).

H68 serves as a coordination point for Zn(2+). D70 is an active-site residue. D92 lines the Zn(2+) pocket. E122 acts as the Proton acceptor in catalysis. Residues E123, E146, and H317 each coordinate Zn(2+).

The protein belongs to the peptidase M20A family. LysK subfamily. The cofactor is Zn(2+). Requires Co(2+) as cofactor.

The protein resides in the cytoplasm. It carries out the reaction [amino-group carrier protein]-C-terminal-gamma-(L-lysyl)-L-glutamate + H2O = [amino-group carrier protein]-C-terminal-L-glutamate + L-lysine. The enzyme catalyses [amino-group carrier protein]-C-terminal-gamma-(L-ornithyl)-L-glutamate + H2O = [amino-group carrier protein]-C-terminal-L-glutamate + L-ornithine. It functions in the pathway amino-acid biosynthesis; L-lysine biosynthesis via AAA pathway; L-lysine from L-alpha-aminoadipate (Thermus route): step 5/5. It participates in amino-acid biosynthesis; L-arginine biosynthesis. Functionally, catalyzes the release of L-lysine from [LysW]-gamma-L-lysine and the release of L-ornithine from [LysW]-L-ornithine. The sequence is that of [LysW]-lysine/[LysW]-ornithine hydrolase from Saccharolobus islandicus (strain M.16.27) (Sulfolobus islandicus).